The primary structure comprises 257 residues: Histidine/lysine/arginine/ornithine transport ATP-binding protein HisP (257 aa).

The ABC transporter domain occupies 6-252 (LNVIDLHKRY…PQSPRLQRFL (247 aa)). ATP contacts are provided by serine 40, glycine 41, glycine 43, lysine 44, serine 45, and threonine 46.

It belongs to the ABC transporter superfamily. The HisPMQJ complex is composed of two ATP-binding proteins (HisP), two transmembrane proteins (HisM and HisQ) and a solute-binding protein (HisJ). The HisPMQ-ArgT complex is composed of two ATP-binding proteins (HisP), two transmembrane proteins (HisM and HisQ) and a solute-binding protein (ArgT).

It localises to the cell inner membrane. It carries out the reaction a polar amino acid(out) + ATP + H2O = a polar amino acid(in) + ADP + phosphate + H(+). It catalyses the reaction L-histidine(out) + ATP + H2O = L-histidine(in) + ADP + phosphate + H(+). The enzyme catalyses L-lysine(out) + ATP + H2O = L-lysine(in) + ADP + phosphate + H(+). The catalysed reaction is L-arginine(out) + ATP + H2O = L-arginine(in) + ADP + phosphate + H(+). It carries out the reaction L-ornithine(out) + ATP + H2O = L-ornithine(in) + ADP + phosphate + H(+). In terms of biological role, part of the ABC transporter complex HisPMQJ involved in histidine transport. Is also part of the ABC transporter complex HisPMQ-ArgT involved in lysine/arginine/ornithine transport. Shows ATPase activity. Responsible for energy coupling to the transport system. The protein is Histidine/lysine/arginine/ornithine transport ATP-binding protein HisP of Escherichia coli (strain K12).